The chain runs to 605 residues: 9-cis-epoxycarotenoid dioxygenase NCED1, chloroplastic (605 aa).

The transit peptide at 1–16 (MATTTSHATNTWIKTK) directs the protein to the chloroplast. Residues 55-89 (ILHFPKQSSNYQTPKNNTISHPKQENNNSSSSSTS) are disordered. The span at 60–75 (KQSSNYQTPKNNTISH) shows a compositional bias: polar residues. The span at 80 to 89 (NNNSSSSSTS) shows a compositional bias: low complexity. The Fe cation site is built by H302, H351, H416, and H592.

Belongs to the carotenoid oxygenase family. The cofactor is Fe(2+). As to expression, expressed in developing and ripening fruits. Highly expressed in pulp. Observed in unpollinated ovaries (e.g. ovules, placenta and pericarp). Expressed in flowers.

It is found in the plastid. Its subcellular location is the chloroplast stroma. The catalysed reaction is a 9-cis-epoxycarotenoid + O2 = a 12'-apo-carotenal + 2-cis,4-trans-xanthoxin. It catalyses the reaction 9-cis-violaxanthin + O2 = (3S,5R,6S)-5,6-epoxy-3-hydroxy-5,6-dihydro-12'-apo-beta-caroten-12'-al + 2-cis,4-trans-xanthoxin. The enzyme catalyses 9'-cis-neoxanthin + O2 = (3S,5R,6R)-3,5-dihydroxy-6,7-didehydro-5,6-dihydro-12'-apo-beta-caroten-12'-al + 2-cis,4-trans-xanthoxin. It functions in the pathway plant hormone biosynthesis; abscisate biosynthesis. Its function is as follows. Has a 11,12(11',12') 9-cis epoxycarotenoid cleavage activity. Catalyzes the first step of abscisic-acid (ABA) biosynthesis from carotenoids. Required for ABA accumulation upon drought. Required for ABA-mediated regulation of anther/pollen development, including metabolism, cell wall modification and transcription level. Positive regulator of fruit ripening involved in the biosynthesis of abscisic acid (ABA); initiates ABA biosynthesis at the onset of fruit ripening. Modulates the degree of pigmentation and carotenoid composition as well as pectin catabolism during ripening and may regulate the ethylene production and action in climacteric tomato fruit. In Solanum lycopersicum (Tomato), this protein is 9-cis-epoxycarotenoid dioxygenase NCED1, chloroplastic.